Reading from the N-terminus, the 477-residue chain is Glycogen synthase (477 aa).

K15 contributes to the ADP-alpha-D-glucose binding site.

The protein belongs to the glycosyltransferase 1 family. Bacterial/plant glycogen synthase subfamily.

It carries out the reaction [(1-&gt;4)-alpha-D-glucosyl](n) + ADP-alpha-D-glucose = [(1-&gt;4)-alpha-D-glucosyl](n+1) + ADP + H(+). The protein operates within glycan biosynthesis; glycogen biosynthesis. Functionally, synthesizes alpha-1,4-glucan chains using ADP-glucose. This chain is Glycogen synthase, found in Salmonella arizonae (strain ATCC BAA-731 / CDC346-86 / RSK2980).